Consider the following 435-residue polypeptide: Transcriptional enhancer factor TEF-5 (435 aa).

Residues 1–12 (MASNSWNASSSP) are compositionally biased toward polar residues. Positions 1 to 34 (MASNSWNASSSPGEAREDGPEGLDKGLDNDAEGV) are disordered. Ala2 carries the N-acetylalanine modification. Positions 14–28 (EAREDGPEGLDKGLD) are enriched in basic and acidic residues. Residues 28-104 (DNDAEGVWSP…QVLARKKVRE (77 aa)) constitute a DNA-binding region (TEA). Ser148 carries the phosphoserine modification. The segment at 173 to 435 (GPSQDIKPFA…QHHVYKLVKD (263 aa)) is transcriptional activation.

Interacts with YAP1 and WWTR1/TAZ. Preferentially expressed in the placenta.

Its subcellular location is the nucleus. Functionally, transcription factor which plays a key role in the Hippo signaling pathway, a pathway involved in organ size control and tumor suppression by restricting proliferation and promoting apoptosis. The core of this pathway is composed of a kinase cascade wherein MST1/MST2, in complex with its regulatory protein SAV1, phosphorylates and activates LATS1/2 in complex with its regulatory protein MOB1, which in turn phosphorylates and inactivates YAP1 oncoprotein and WWTR1/TAZ. Acts by mediating gene expression of YAP1 and WWTR1/TAZ, thereby regulating cell proliferation, migration and epithelial mesenchymal transition (EMT) induction. Binds to multiple functional elements of the human chorionic somatomammotropin-B gene enhancer. This is Transcriptional enhancer factor TEF-5 (TEAD3) from Homo sapiens (Human).